A 504-amino-acid polypeptide reads, in one-letter code: Glycerol kinase (504 aa).

T14 provides a ligand contact to ADP. ATP-binding residues include T14, T15, and S16. T14 contacts sn-glycerol 3-phosphate. Residue R18 participates in ADP binding. 4 residues coordinate sn-glycerol 3-phosphate: R84, E85, Y136, and D246. Positions 84, 85, 136, 246, and 247 each coordinate glycerol. 2 residues coordinate ADP: T268 and G311. Residues T268, G311, Q315, and G412 each coordinate ATP. Positions 412 and 416 each coordinate ADP.

This sequence belongs to the FGGY kinase family.

It catalyses the reaction glycerol + ATP = sn-glycerol 3-phosphate + ADP + H(+). The protein operates within polyol metabolism; glycerol degradation via glycerol kinase pathway; sn-glycerol 3-phosphate from glycerol: step 1/1. With respect to regulation, inhibited by fructose 1,6-bisphosphate (FBP). Key enzyme in the regulation of glycerol uptake and metabolism. Catalyzes the phosphorylation of glycerol to yield sn-glycerol 3-phosphate. This is Glycerol kinase from Aliivibrio salmonicida (strain LFI1238) (Vibrio salmonicida (strain LFI1238)).